The primary structure comprises 927 residues: DNA-binding protein RFX6 (927 aa).

Disordered stretches follow at residues 1–21 (MAKV…PQLP) and 81–108 (NFSS…QKKS). A DNA-binding region (RFX-type winged-helix) is located at residues 123-198 (TLQWLEDNYI…YHYYGIGIKE (76 aa)).

The protein belongs to the RFX family. Interacts with RFX3. In terms of tissue distribution, in the adult pancreas, expression is restricted to the islets where it could be detected in all endocrine lineages.

The protein resides in the nucleus. Its function is as follows. Transcription factor required to direct islet cell differentiation during endocrine pancreas development. Specifically required for the differentiation of 4 of the 5 islet cell types and for the production of insulin. Not required for pancreatic PP (polypeptide-producing) cells differentiation. Acts downstream of NEUROG3 and regulates the transcription factors involved in beta-cell maturation and function, thereby restricting the expression of the beta-cell differentiation and specification genes, and thus the beta-cell fate choice. Activates transcription by forming a heterodimer with RFX3 and binding to the X-box in the promoter of target genes. Involved in glucose-stimulated insulin secretion by promoting insulin and L-type calcium channel gene transcription. This is DNA-binding protein RFX6 (Rfx6) from Mus musculus (Mouse).